Reading from the N-terminus, the 237-residue chain is MFQSQRLCGWIMNMNTDHETSDSGGSDEGDRRAELSTPAVGRLSLYYRELHRLLAAGESSTNSRDLGAMVNVSPAVVRRDLSSIGSIGRRGVGYDVAILAERIGAVLGSGVQWKAVLIGVGSLGNALLRYRGFERLGFSLAAAFDTDPAKYGHEVGGTTVRSLDDLEEVLATAKPELAILAVPSEQASQVATRVLAGGIQGILNFAPTTLRVPPGTAIINVDLASELQQLAFRIQNR.

The segment at residues 45-84 is a DNA-binding region (H-T-H motif); that stretch reads LYYRELHRLLAAGESSTNSRDLGAMVNVSPAVVRRDLSSI. 119–124 is an NAD(+) binding site; that stretch reads GVGSLG.

Belongs to the transcriptional regulatory Rex family. In terms of assembly, homodimer.

Its subcellular location is the cytoplasm. Modulates transcription in response to changes in cellular NADH/NAD(+) redox state. The sequence is that of Redox-sensing transcriptional repressor Rex from Rhodopirellula baltica (strain DSM 10527 / NCIMB 13988 / SH1).